The primary structure comprises 120 residues: Large ribosomal subunit protein bL17 (120 aa).

This sequence belongs to the bacterial ribosomal protein bL17 family. As to quaternary structure, part of the 50S ribosomal subunit. Contacts protein L32.

The sequence is that of Large ribosomal subunit protein bL17 from Bacillus cereus (strain ATCC 14579 / DSM 31 / CCUG 7414 / JCM 2152 / NBRC 15305 / NCIMB 9373 / NCTC 2599 / NRRL B-3711).